The chain runs to 673 residues: MNDQGIKESIETLKEQIRKYDYHYYVLDEPLVPDAEYDRCFKALQQYEEQYPQFLSPDSPTQRVSGTPSDAFMPVAHKQAMLSLSNVFTTDELKAFIKRAIEKLDEPNQQLVFACEPKLDGLAVNMTYEGGILTHAATRGDGAVGENITANIKTIASVPLRLRVSNPPKLIEVRGEVYIPKADFEAYNARARELGEKTFANPRNAAAGSLRQLNPEISASRPLAIYCYGIGACEDYKLPNSHLEQLNLLKEFGFRVSPETRRAVGVEGCLDYYQYMLAKRNQLPFEIDGVVYKIDSISLQQQLGYVSRAPRFACAHKFPATEEMTRLIAVDFQVGRTGAVTPVARLEPVSVGGVTVSNATLHNFDEITRKDIHIGDTVIIRRAGDVIPEVVSVILEKRPANARKIELPKNCPVCGSEVVREADEAIARCVGGLYCKAQLKRMMWHFASRKAMYIEGLGSVLIDQLVDEGIVHHLADLYELDLQTLANLPRMGEKSAKNLLSALEKSKKTTFNRFLYALGIREIGEAGARVLAEHYCDVESLKAATIEELMTLNDIGPVAASHIVHFFAQAHNLEVIDRLLELGIHWPKPEKIQVNQQNPFFGKTVVLTGTLSTMGREEAKAKLLALGAKVSGSVSSKTDYLVAGSEAGSKLVKATELGVAIIEEDEFLKWVNS.

Residues 34 to 38 (DAEYD), 83 to 84 (SL), and E116 contribute to the NAD(+) site. K118 acts as the N6-AMP-lysine intermediate in catalysis. Positions 139, 176, 293, and 317 each coordinate NAD(+). Zn(2+) is bound by residues C411, C414, C429, and C435. One can recognise a BRCT domain in the interval 595-673 (NQQNPFFGKT…EDEFLKWVNS (79 aa)).

It belongs to the NAD-dependent DNA ligase family. LigA subfamily. Mg(2+) is required as a cofactor. Mn(2+) serves as cofactor.

The catalysed reaction is NAD(+) + (deoxyribonucleotide)n-3'-hydroxyl + 5'-phospho-(deoxyribonucleotide)m = (deoxyribonucleotide)n+m + AMP + beta-nicotinamide D-nucleotide.. Functionally, DNA ligase that catalyzes the formation of phosphodiester linkages between 5'-phosphoryl and 3'-hydroxyl groups in double-stranded DNA using NAD as a coenzyme and as the energy source for the reaction. It is essential for DNA replication and repair of damaged DNA. The chain is DNA ligase from Legionella pneumophila (strain Corby).